The chain runs to 285 residues: Xanthoxin dehydrogenase (285 aa).

N-acetylserine is present on S2.

Belongs to the short-chain dehydrogenases/reductases (SDR) family. In terms of tissue distribution, predominantly in roots and stems, and at lower levels in leaves and seeds.

It is found in the cytoplasm. The catalysed reaction is 2-cis,4-trans-xanthoxin + NAD(+) = 2-cis-(+)-abscisic aldehyde + NADH + H(+). The enzyme catalyses 2-trans,4-trans-xanthoxin + NAD(+) = 2-trans-(+)-abscisic aldehyde + NADH + H(+). Functionally, involved in the biosynthesis of abscisic acid. Catalyzes the conversion of xanthoxin to abscisic aldehyde. The protein is Xanthoxin dehydrogenase of Arabidopsis thaliana (Mouse-ear cress).